The chain runs to 202 residues: Small ribosomal subunit protein uS5 (202 aa).

Positions 50–113 constitute an S5 DRBM domain; the sequence is LKQEILNINV…REAKLNLTPV (64 aa).

It belongs to the universal ribosomal protein uS5 family. As to quaternary structure, part of the 30S ribosomal subunit. Contacts protein S4.

In terms of biological role, with S4 and S12 plays an important role in translational accuracy. The protein is Small ribosomal subunit protein uS5 of Pyrobaculum islandicum (strain DSM 4184 / JCM 9189 / GEO3).